A 318-amino-acid polypeptide reads, in one-letter code: Protein FdhE homolog (318 aa).

The protein belongs to the FdhE family.

The protein localises to the cytoplasm. In terms of biological role, necessary for formate dehydrogenase activity. This Pseudomonas putida (strain ATCC 47054 / DSM 6125 / CFBP 8728 / NCIMB 11950 / KT2440) protein is Protein FdhE homolog.